A 281-amino-acid polypeptide reads, in one-letter code: Shikimate dehydrogenase (NADP(+)) (281 aa).

Shikimate contacts are provided by residues 14 to 16 (SRS) and T61. K65 acts as the Proton acceptor in catalysis. Shikimate is bound by residues N86 and D101. Residues 127–131 (GAGGA), 151–156 (NRTLAR), and V216 each bind NADP(+). A shikimate-binding site is contributed by Y218. NADP(+) is bound at residue G239.

The protein belongs to the shikimate dehydrogenase family. Homodimer.

The catalysed reaction is shikimate + NADP(+) = 3-dehydroshikimate + NADPH + H(+). The protein operates within metabolic intermediate biosynthesis; chorismate biosynthesis; chorismate from D-erythrose 4-phosphate and phosphoenolpyruvate: step 4/7. Involved in the biosynthesis of the chorismate, which leads to the biosynthesis of aromatic amino acids. Catalyzes the reversible NADPH linked reduction of 3-dehydroshikimate (DHSA) to yield shikimate (SA). This Azorhizobium caulinodans (strain ATCC 43989 / DSM 5975 / JCM 20966 / LMG 6465 / NBRC 14845 / NCIMB 13405 / ORS 571) protein is Shikimate dehydrogenase (NADP(+)).